The chain runs to 68 residues: Amphipathic peptide VmCT1 (68 aa).

Residues 1-23 (MKTQFVILIVAVVLLQLISHSEA) form the signal peptide. Phenylalanine amide is present on F36. Positions 40–68 (GLRNFDDLDDTFEPEMSEADLKYLQDLLR) are excised as a propeptide.

It belongs to the non-disulfide-bridged peptide (NDBP) superfamily. Short antimicrobial peptide (group 4) family. As to expression, expressed by the venom gland.

It is found in the secreted. The protein localises to the target cell membrane. Functionally, cationic amphipathic peptide with antibacterial activities against both Gram-positive and Gram-negative bacteria. Also shows antifungal activities. Is mildly hemolytic against human erythrocytes. In addition, when tested in vitro on the parasite Trypanosoma cruzi (responsible of the Chagas disease), is able to reduce the number of the three forms (epimastigote, trypomastigote and amastigote). Also shows antiplasmodial and cytotoxic activity (tested on Plasmodium gallinaceum, and MCF-7 breast cancer cell line). The chain is Amphipathic peptide VmCT1 from Vaejovis mexicanus smithi (Mexican scorpion).